Reading from the N-terminus, the 34-residue chain is Ribonuclease PL1 (34 aa).

N4 carries an N-linked (GlcNAc...) asparagine; partial glycan. H15 serves as the catalytic Proton acceptor.

This sequence belongs to the pancreatic ribonuclease family.

It is found in the lysosome. It carries out the reaction an [RNA] containing cytidine + H2O = an [RNA]-3'-cytidine-3'-phosphate + a 5'-hydroxy-ribonucleotide-3'-[RNA].. The enzyme catalyses an [RNA] containing uridine + H2O = an [RNA]-3'-uridine-3'-phosphate + a 5'-hydroxy-ribonucleotide-3'-[RNA].. This chain is Ribonuclease PL1, found in Sus scrofa (Pig).